We begin with the raw amino-acid sequence, 328 residues long: DNA-directed RNA polymerase subunit alpha (328 aa).

Positions 1–234 are alpha N-terminal domain (alpha-NTD); that stretch reads MVREKVKVST…DLFIPFLQAE (234 aa). The interval 268–328 is alpha C-terminal domain (alpha-CTD); the sequence is IALKSIFIDQ…KQIMSILEKK (61 aa).

This sequence belongs to the RNA polymerase alpha chain family. In plastids the minimal PEP RNA polymerase catalytic core is composed of four subunits: alpha, beta, beta', and beta''. When a (nuclear-encoded) sigma factor is associated with the core the holoenzyme is formed, which can initiate transcription.

Its subcellular location is the plastid. It localises to the chloroplast. It catalyses the reaction RNA(n) + a ribonucleoside 5'-triphosphate = RNA(n+1) + diphosphate. In terms of biological role, DNA-dependent RNA polymerase catalyzes the transcription of DNA into RNA using the four ribonucleoside triphosphates as substrates. This is DNA-directed RNA polymerase subunit alpha from Citrus sinensis (Sweet orange).